The primary structure comprises 322 residues: NADH-quinone oxidoreductase subunit H (322 aa).

The next 8 membrane-spanning stretches (helical) occupy residues 15-35, 82-102, 114-134, 149-169, 186-206, 243-263, 265-285, and 302-322; these read ILHITLIIIFIIFFAATLSIL, IFILSPIIAFVSLLLVIPTIP, IGILFFLMMASLSVYAVLFAG, ASAQTLSYEVFLGLSLMGVIA, VWNVIPQFFGFLCFFIAGIAL, ISIITVSALISTVFFGGYFGF, GSSFFWLFLKTVFFILIFILI, and WKICLPLTLLNLIITAFFILI.

This sequence belongs to the complex I subunit 1 family. As to quaternary structure, NDH-1 is composed of 13 different subunits. Subunits NuoA, H, J, K, L, M, N constitute the membrane sector of the complex.

It is found in the cell membrane. The enzyme catalyses a quinone + NADH + 5 H(+)(in) = a quinol + NAD(+) + 4 H(+)(out). NDH-1 shuttles electrons from NADH, via FMN and iron-sulfur (Fe-S) centers, to quinones in the respiratory chain. The immediate electron acceptor for the enzyme in this species is believed to be ubiquinone. Couples the redox reaction to proton translocation (for every two electrons transferred, four hydrogen ions are translocated across the cytoplasmic membrane), and thus conserves the redox energy in a proton gradient. This subunit may bind ubiquinone. This chain is NADH-quinone oxidoreductase subunit H, found in Buchnera aphidicola subsp. Schizaphis graminum (strain Sg).